The sequence spans 227 residues: Ribosomal RNA large subunit methyltransferase E (227 aa).

S-adenosyl-L-methionine-binding residues include glycine 78, tryptophan 80, aspartate 103, aspartate 119, and aspartate 143. Lysine 183 acts as the Proton acceptor in catalysis.

Belongs to the class I-like SAM-binding methyltransferase superfamily. RNA methyltransferase RlmE family.

Its subcellular location is the cytoplasm. It catalyses the reaction uridine(2552) in 23S rRNA + S-adenosyl-L-methionine = 2'-O-methyluridine(2552) in 23S rRNA + S-adenosyl-L-homocysteine + H(+). In terms of biological role, specifically methylates the uridine in position 2552 of 23S rRNA at the 2'-O position of the ribose in the fully assembled 50S ribosomal subunit. The polypeptide is Ribosomal RNA large subunit methyltransferase E (Rickettsia akari (strain Hartford)).